We begin with the raw amino-acid sequence, 144 residues long: Transcriptional regulator MraZ (144 aa).

SpoVT-AbrB domains lie at 5-47 and 77-120; these read TYTP…PRAE and TDEQ…DAQA.

Belongs to the MraZ family. In terms of assembly, forms oligomers.

The protein resides in the cytoplasm. It localises to the nucleoid. The chain is Transcriptional regulator MraZ from Mycolicibacterium vanbaalenii (strain DSM 7251 / JCM 13017 / BCRC 16820 / KCTC 9966 / NRRL B-24157 / PYR-1) (Mycobacterium vanbaalenii).